The following is a 472-amino-acid chain: Adenosylhomocysteinase (472 aa).

Substrate is bound by residues threonine 62, aspartate 137, and glutamate 197. 198 to 200 contacts NAD(+); it reads TTT. Substrate is bound by residues lysine 227 and aspartate 231. NAD(+) contacts are provided by residues asparagine 232, 261–266, glutamate 284, asparagine 319, 340–342, and asparagine 385; these read GYGDVG and IGH.

Belongs to the adenosylhomocysteinase family. NAD(+) serves as cofactor.

The protein resides in the cytoplasm. It carries out the reaction S-adenosyl-L-homocysteine + H2O = L-homocysteine + adenosine. Its pathway is amino-acid biosynthesis; L-homocysteine biosynthesis; L-homocysteine from S-adenosyl-L-homocysteine: step 1/1. Its function is as follows. May play a key role in the regulation of the intracellular concentration of adenosylhomocysteine. The sequence is that of Adenosylhomocysteinase from Bordetella pertussis (strain Tohama I / ATCC BAA-589 / NCTC 13251).